The following is a 316-amino-acid chain: L-lactate dehydrogenase 3 (316 aa).

Valine 16, aspartate 37, arginine 42, and tyrosine 68 together coordinate NAD(+). Arginine 91 serves as a coordination point for substrate. NAD(+)-binding positions include serine 104, 121–123 (ASN), and threonine 146. Residue 123-126 (NPVD) coordinates substrate. Residue 151–154 (DSSR) coordinates substrate. Positions 156 and 171 each coordinate beta-D-fructose 1,6-bisphosphate. The Proton acceptor role is filled by histidine 178. Residue threonine 233 participates in substrate binding.

It belongs to the LDH/MDH superfamily. LDH family. Homotetramer.

It localises to the cytoplasm. It carries out the reaction (S)-lactate + NAD(+) = pyruvate + NADH + H(+). The protein operates within fermentation; pyruvate fermentation to lactate; (S)-lactate from pyruvate: step 1/1. With respect to regulation, allosterically activated by fructose 1,6-bisphosphate (FBP). Catalyzes the conversion of lactate to pyruvate. This is L-lactate dehydrogenase 3 from Bacillus cereus (strain ATCC 14579 / DSM 31 / CCUG 7414 / JCM 2152 / NBRC 15305 / NCIMB 9373 / NCTC 2599 / NRRL B-3711).